The sequence spans 499 residues: Glycerol kinase (499 aa).

Thr12 contacts ADP. ATP contacts are provided by Thr12, Thr13, and Ser14. Residue Thr12 coordinates sn-glycerol 3-phosphate. Residue Arg16 coordinates ADP. Sn-glycerol 3-phosphate contacts are provided by Arg82, Glu83, Tyr134, and Asp243. Positions 82, 83, 134, 243, and 244 each coordinate glycerol. ADP contacts are provided by Thr265 and Gly308. Thr265, Gly308, Gln312, and Gly409 together coordinate ATP. ADP is bound by residues Gly409 and Asn413.

The protein belongs to the FGGY kinase family. As to quaternary structure, homotetramer and homodimer (in equilibrium).

It catalyses the reaction glycerol + ATP = sn-glycerol 3-phosphate + ADP + H(+). The protein operates within polyol metabolism; glycerol degradation via glycerol kinase pathway; sn-glycerol 3-phosphate from glycerol: step 1/1. Its activity is regulated as follows. Activated by phosphorylation and inhibited by fructose 1,6-bisphosphate (FBP). Functionally, key enzyme in the regulation of glycerol uptake and metabolism. Catalyzes the phosphorylation of glycerol to yield sn-glycerol 3-phosphate. This Lachnoclostridium phytofermentans (strain ATCC 700394 / DSM 18823 / ISDg) (Clostridium phytofermentans) protein is Glycerol kinase.